The following is a 521-amino-acid chain: Bifunctional purine biosynthesis protein PurH (521 aa).

In terms of domain architecture, MGS-like spans 1–145; it reads MIKQALISVS…KNHRDVTVVV (145 aa).

The protein belongs to the PurH family.

The catalysed reaction is (6R)-10-formyltetrahydrofolate + 5-amino-1-(5-phospho-beta-D-ribosyl)imidazole-4-carboxamide = 5-formamido-1-(5-phospho-D-ribosyl)imidazole-4-carboxamide + (6S)-5,6,7,8-tetrahydrofolate. The enzyme catalyses IMP + H2O = 5-formamido-1-(5-phospho-D-ribosyl)imidazole-4-carboxamide. The protein operates within purine metabolism; IMP biosynthesis via de novo pathway; 5-formamido-1-(5-phospho-D-ribosyl)imidazole-4-carboxamide from 5-amino-1-(5-phospho-D-ribosyl)imidazole-4-carboxamide (10-formyl THF route): step 1/1. It functions in the pathway purine metabolism; IMP biosynthesis via de novo pathway; IMP from 5-formamido-1-(5-phospho-D-ribosyl)imidazole-4-carboxamide: step 1/1. The protein is Bifunctional purine biosynthesis protein PurH of Burkholderia ambifaria (strain ATCC BAA-244 / DSM 16087 / CCUG 44356 / LMG 19182 / AMMD) (Burkholderia cepacia (strain AMMD)).